The primary structure comprises 249 residues: Triosephosphate isomerase (249 aa).

Asn-9–Lys-11 is a substrate binding site. Catalysis depends on His-94, which acts as the Electrophile. The Proton acceptor role is filled by Glu-166. Residues Gly-172, Ser-211, and Gly-232–Gly-233 each bind substrate.

The protein belongs to the triosephosphate isomerase family. Homodimer.

Its subcellular location is the cytoplasm. It carries out the reaction D-glyceraldehyde 3-phosphate = dihydroxyacetone phosphate. It functions in the pathway carbohydrate biosynthesis; gluconeogenesis. The protein operates within carbohydrate degradation; glycolysis; D-glyceraldehyde 3-phosphate from glycerone phosphate: step 1/1. Involved in the gluconeogenesis. Catalyzes stereospecifically the conversion of dihydroxyacetone phosphate (DHAP) to D-glyceraldehyde-3-phosphate (G3P). The protein is Triosephosphate isomerase of Dechloromonas aromatica (strain RCB).